Consider the following 36-residue polypeptide: Pancreatic polypeptide (36 aa).

Tyrosine amide is present on Y36.

The protein belongs to the NPY family.

It is found in the secreted. In terms of biological role, hormone secreted by pancreatic cells that acts as a regulator of pancreatic and gastrointestinal functions probably by signaling through the G protein-coupled receptor NPY4R2. The polypeptide is Pancreatic polypeptide (PPY) (Macaca mulatta (Rhesus macaque)).